Consider the following 420-residue polypeptide: Interleukin-5 receptor subunit alpha (420 aa).

The signal sequence occupies residues 1–20; sequence MIIVAHVLLILLGATEILQA. At 21 to 342 the chain is on the extracellular side; it reads DLLPDEKISL…NDEHKPLREW (322 aa). Residues 32-123 enclose the Fibronectin type-III 1 domain; sequence PPVNFTIKVT…ASAELHAPPG (92 aa). 2 N-linked (GlcNAc...) asparagine glycosylation sites follow: Asn-35 and Asn-131. Intrachain disulfides connect Cys-134–Cys-155 and Cys-182–Cys-196. 2 N-linked (GlcNAc...) asparagine glycosylation sites follow: Asn-216 and Asn-244. Residues 241-334 form the Fibronectin type-III 2 domain; it reads PPLNVTAEIE…WSQPIYVGND (94 aa). Cys-269 and Cys-316 are oxidised to a cystine. The WSXWS motif motif lies at 322–326; that stretch reads WSEWS. The chain crosses the membrane as a helical span at residues 343–362; that stretch reads FVIVIMATICFILLILSLIC. Topologically, residues 363 to 420 are cytoplasmic; the sequence is KICHLWIKLFPPIPAPKSNIKDLFVTTNYEKAGSSETEIEVICYIEKPGVETLEDSVF. Positions 371-379 match the Box 1 motif motif; that stretch reads LFPPIPAPK.

This sequence belongs to the type I cytokine receptor family. Type 5 subfamily. In terms of assembly, interacts with IL5. Interacts with CSF2RB. Interacts with JAK2. Interacts with SDCBP. As to expression, expressed on eosinophils and basophils.

It localises to the membrane. Its function is as follows. Cell surface receptor that plays an important role in the survival, differentiation, and chemotaxis of eosinophils. Acts by forming a heterodimeric receptor with CSF2RB subunit and subsequently binding to interleukin-5. In unstimulated conditions, interacts constitutively with JAK2. Heterodimeric receptor activation leads to JAK2 stimulation and subsequent activation of the JAK-STAT pathway. The polypeptide is Interleukin-5 receptor subunit alpha (IL5RA) (Homo sapiens (Human)).